A 393-amino-acid chain; its full sequence is 1-deoxy-D-xylulose 5-phosphate reductoisomerase (393 aa).

NADPH-binding residues include Thr-10, Gly-11, Ser-12, Ile-13, Gln-38, and Asn-124. Lys-125 lines the 1-deoxy-D-xylulose 5-phosphate pocket. Residue Glu-126 coordinates NADPH. A Mn(2+)-binding site is contributed by Asp-150. Residues Ser-151, Glu-152, Ser-179, and His-202 each coordinate 1-deoxy-D-xylulose 5-phosphate. Glu-152 lines the Mn(2+) pocket. Gly-208 contributes to the NADPH binding site. The 1-deoxy-D-xylulose 5-phosphate site is built by Ser-215, Asn-220, Lys-221, and Glu-224. Glu-224 provides a ligand contact to Mn(2+).

The protein belongs to the DXR family. Mg(2+) serves as cofactor. It depends on Mn(2+) as a cofactor.

It catalyses the reaction 2-C-methyl-D-erythritol 4-phosphate + NADP(+) = 1-deoxy-D-xylulose 5-phosphate + NADPH + H(+). Its pathway is isoprenoid biosynthesis; isopentenyl diphosphate biosynthesis via DXP pathway; isopentenyl diphosphate from 1-deoxy-D-xylulose 5-phosphate: step 1/6. Functionally, catalyzes the NADPH-dependent rearrangement and reduction of 1-deoxy-D-xylulose-5-phosphate (DXP) to 2-C-methyl-D-erythritol 4-phosphate (MEP). In Ralstonia nicotianae (strain ATCC BAA-1114 / GMI1000) (Ralstonia solanacearum), this protein is 1-deoxy-D-xylulose 5-phosphate reductoisomerase.